Consider the following 46-residue polypeptide: KSCCPBTTGRBIYBTCRFGGGSRZVCARISGCKIISASTCPSYPBK.

3 cysteine pairs are disulfide-bonded: C3–C40, C4–C32, and C16–C26.

Belongs to the plant thionin (TC 1.C.44) family.

It localises to the secreted. Thionins are small plant proteins which are toxic to animal cells. They seem to exert their toxic effect at the level of the cell membrane. Their precise function is not known. The protein is Viscotoxin-1-PS (THI2.4) of Viscum album (European mistletoe).